A 248-amino-acid chain; its full sequence is Acyl-coenzyme A thioesterase THEM5 (248 aa).

Residue aspartate 167 is the Proton donor/acceptor of the active site.

The protein belongs to the THEM4/THEM5 thioesterase family. As to quaternary structure, homodimer.

It localises to the mitochondrion matrix. It catalyses the reaction hexadecanoyl-CoA + H2O = hexadecanoate + CoA + H(+). The catalysed reaction is (9Z,12Z)-octadecadienoyl-CoA + H2O = (9Z,12Z)-octadecadienoate + CoA + H(+). It carries out the reaction tetradecanoyl-CoA + H2O = tetradecanoate + CoA + H(+). The enzyme catalyses (9Z)-octadecenoyl-CoA + H2O = (9Z)-octadecenoate + CoA + H(+). It catalyses the reaction (9Z)-hexadecenoyl-CoA + H2O = (9Z)-hexadecenoate + CoA + H(+). The catalysed reaction is (5Z,8Z,11Z,14Z)-eicosatetraenoyl-CoA + H2O = (5Z,8Z,11Z,14Z)-eicosatetraenoate + CoA + H(+). It carries out the reaction octadecanoyl-CoA + H2O = octadecanoate + CoA + H(+). In terms of biological role, has acyl-CoA thioesterase activity towards long-chain (C16 and C18) fatty acyl-CoA substrates, with a preference for linoleoyl-CoA and other unsaturated long-chain fatty acid-CoA esters. Plays an important role in mitochondrial fatty acid metabolism, and in remodeling of the mitochondrial lipid cardiolipin. Required for normal mitochondrial function. In Mus musculus (Mouse), this protein is Acyl-coenzyme A thioesterase THEM5 (Them5).